The chain runs to 445 residues: Phosphoglucosamine mutase (445 aa).

Serine 103 serves as the catalytic Phosphoserine intermediate. Residues serine 103, aspartate 240, aspartate 242, and aspartate 244 each coordinate Mg(2+). Serine 103 bears the Phosphoserine mark.

The protein belongs to the phosphohexose mutase family. Mg(2+) is required as a cofactor. Post-translationally, activated by phosphorylation.

The enzyme catalyses alpha-D-glucosamine 1-phosphate = D-glucosamine 6-phosphate. In terms of biological role, catalyzes the conversion of glucosamine-6-phosphate to glucosamine-1-phosphate. The protein is Phosphoglucosamine mutase of Cellvibrio japonicus (strain Ueda107) (Pseudomonas fluorescens subsp. cellulosa).